Reading from the N-terminus, the 283-residue chain is Rhomboid-like protease 2 (283 aa).

Polar residues predominate over residues 1–11 (MANIRTLSDYA). A disordered region spans residues 1–26 (MANIRTLSDYASSPPRGSSALEGEVG). The next 3 membrane-spanning stretches (helical) occupy residues 62–82 (IIII…AGLA), 114–134 (ICPL…WVQI), and 149–169 (LLAV…AVLF). S178 serves as the catalytic Nucleophile. 4 helical membrane passes run 179 to 199 (TAVF…WHAI), 205 to 225 (AIIS…GSHM), 227 to 247 (SVGH…LNEN), and 260 to 280 (LTSQ…IFLV). H230 is an active-site residue.

It belongs to the peptidase S54 family.

Its subcellular location is the membrane. The enzyme catalyses Cleaves type-1 transmembrane domains using a catalytic dyad composed of serine and histidine that are contributed by different transmembrane domains.. In terms of biological role, serine protease involved in intramembrane proteolysis and the subsequent release of polypeptides from their membrane anchors. The chain is Rhomboid-like protease 2 (ROM2) from Toxoplasma gondii.